Reading from the N-terminus, the 128-residue chain is Kinetoplast-associated protein 4 (128 aa).

The propeptide occupies 1–10; sequence MLRFVPRRLA. The interval 60-87 is disordered; it reads AHPGFKRKEKEPKELKAAKAAKTSTPRA. The span at 65 to 76 shows a compositional bias: basic and acidic residues; it reads KRKEKEPKELKA.

It belongs to the KAP family. Associates with the kinetoplast DNA network.

It is found in the mitochondrion matrix. The protein resides in the kinetoplast. Its function is as follows. Histone H1-like DNA-binding protein involved in the organization and segregation of kinetoplast DNA (kDNA). The mitochondrial DNA of kinetoplastid protozoa consists of about 5,000 minicircles and 20 to 30 maxicircles. These circular DNAs are held together by catenation into a highly organized compact disk structure referred to as a kinetoplast DNA (kDNA) network. Binds preferentially to a specific fragment of minicircle DNA and is able to compact kDNA networks through DNA charge neutralization and condensation. The polypeptide is Kinetoplast-associated protein 4 (KAP4) (Crithidia fasciculata).